A 785-amino-acid chain; its full sequence is Cadherin-7 (785 aa).

The first 27 residues, 1–27, serve as a signal peptide directing secretion; it reads MKLGKVEFCHLLQIIALFLCLSGMNQA. A propeptide spanning residues 28–47 is cleaved from the precursor; sequence EPSRSRSKPYFQSGRTRTKR. The Extracellular portion of the chain corresponds to 48 to 607; it reads SWVWNQFFVL…AYILPAGLST (560 aa). 5 consecutive Cadherin domains span residues 49–153, 154–262, 263–377, 378–482, and 482–599; these read WVWN…EPKF, LDGP…PPRF, PRRS…PPVF, TSRL…APEF, and FAME…AEAY. N-linked (GlcNAc...) asparagine glycosylation is found at Asn-449 and Asn-530. Residues 608 to 628 traverse the membrane as a helical segment; it reads GALIAILACVLTLLVLVLLIV. The Cytoplasmic portion of the chain corresponds to 629–785; it reads TMRRRKKEPL…YGSGPDCLYS (157 aa).

The protein resides in the cell membrane. Cadherins are calcium-dependent cell adhesion proteins. They preferentially interact with themselves in a homophilic manner in connecting cells; cadherins may thus contribute to the sorting of heterogeneous cell types. The chain is Cadherin-7 (CDH7) from Gallus gallus (Chicken).